The chain runs to 145 residues: Mitochondrial import receptor subunit TOM20 homolog (145 aa).

Residues 1 to 6 (MVGRNS) are Mitochondrial intermembrane-facing. Residues 7-24 (AIAAGVCGALFIGYCIYF) traverse the membrane as a helical segment. Residues 25–145 (DRKRRSDPNF…AQSLAEDDVE (121 aa)) lie on the Cytoplasmic side of the membrane. Residues Lys-35, Lys-56, Lys-61, and Lys-68 each participate in a glycyl lysine isopeptide (Lys-Gly) (interchain with G-Cter in ubiquitin) cross-link. Phosphoserine occurs at positions 135 and 138.

Belongs to the Tom20 family. Forms part of the preprotein translocase complex of the outer mitochondrial membrane (TOM complex) which consists of at least 7 different proteins (TOMM5, TOMM6, TOMM7, TOMM20, TOMM22, TOMM40 and TOMM70). Interacts with TOM22. Interacts with APEX1. Interacts with TBC1D21. Upon mitochondrial depolarization, interacts with PINK1; the interaction is required for PINK1-TOM-TIM23 supercomplex formation which is critical for PINK1 stabilization at the outer mitochondrial membrane, kinase activation and downstream mitophagy. In terms of processing, ubiquitinated by PRKN during mitophagy, leading to its degradation and enhancement of mitophagy. Deubiquitinated by USP30. In terms of tissue distribution, expressed in brain, kidney, stomach, colon, jejunum, ileum, testis, ovary and oviduct (at protein level). In the brain, expressed in neural cells of the cerebrum and cerebellum (at protein level). In the kidney, expressed in the proximal to distal tubule in the cortex and the outer and inner zones of the medulla (at protein level). In the stomach, expressed in the basal layer of stratified squamous epithelia in the forestomach and in the gastric pit and fundic gland of the glandular stomach (at protein level). Expressed in epithelial cells of the jejunum, ileum, and colon (at protein level). In the testis, expressed by spermatocytes and spermatogonia (at protein level). In the ovaries, expressed by follicular epithelial cells and corpus luteum cells (at protein level). In the oviduct, expressed in the epithelia of the isthmus and the ciliated cells of the ampulla (at protein level). Expressed in the sperm midpiece (at protein level).

It is found in the mitochondrion outer membrane. Functionally, central component of the receptor complex responsible for the recognition and translocation of cytosolically synthesized mitochondrial preproteins. Together with TOM22 functions as the transit peptide receptor at the surface of the mitochondrion outer membrane and facilitates the movement of preproteins into the TOM40 translocation pore. Required for the translocation across the mitochondrial outer membrane of cytochrome P450 monooxygenases. The chain is Mitochondrial import receptor subunit TOM20 homolog (Tomm20) from Mus musculus (Mouse).